Consider the following 282-residue polypeptide: Benzoyl-CoA reductase subunit D (282 aa).

Residues C130 and C169 each contribute to the [4Fe-4S] cluster site.

In terms of assembly, heterotetramer composed of A, B, C, and D subunits. [4Fe-4S] cluster serves as cofactor.

It catalyses the reaction cyclohexa-1,5-diene-1-carbonyl-CoA + oxidized 2[4Fe-4S]-[ferredoxin] + 2 ADP + 2 phosphate = reduced 2[4Fe-4S]-[ferredoxin] + benzoyl-CoA + 2 ATP + 2 H2O. The catalysed reaction is 3-hydroxybenzoyl-CoA + AH2 + 2 ATP + 2 H2O = 3-hydroxycyclohexa-1,5-diene-1-carbonyl-CoA + A + 2 ADP + 2 phosphate + 2 H(+). Catalyzes the anaerobic reduction of benzoyl-CoA and 3-hydroxybenzoyl-CoA to form cyclohexa-1,5-diene-1-carbonyl-CoA and 3-hydroxycyclohexa-1,5-diene-1-carbonyl-CoA, respectively. The enzyme also reduces other benzoyl-CoA analogs with small substituents at the aromatic ring. The sequence is that of Benzoyl-CoA reductase subunit D (bcrD) from Thauera aromatica.